The sequence spans 292 residues: Acetylglutamate kinase (292 aa).

Residues 64–65 (GG), Arg86, and Asn190 each bind substrate.

Belongs to the acetylglutamate kinase family. ArgB subfamily.

Its subcellular location is the cytoplasm. The enzyme catalyses N-acetyl-L-glutamate + ATP = N-acetyl-L-glutamyl 5-phosphate + ADP. Its pathway is amino-acid biosynthesis; L-arginine biosynthesis; N(2)-acetyl-L-ornithine from L-glutamate: step 2/4. Functionally, catalyzes the ATP-dependent phosphorylation of N-acetyl-L-glutamate. This Citrifermentans bemidjiense (strain ATCC BAA-1014 / DSM 16622 / JCM 12645 / Bem) (Geobacter bemidjiensis) protein is Acetylglutamate kinase.